Consider the following 171-residue polypeptide: Glutamyl-tRNA(Gln) amidotransferase subunit F, mitochondrial (171 aa).

Belongs to the GatF family. In terms of assembly, subunit of the heterotrimeric GatFAB amidotransferase (AdT) complex, composed of A, B and F subunits.

The protein resides in the mitochondrion inner membrane. The enzyme catalyses L-glutamyl-tRNA(Gln) + L-glutamine + ATP + H2O = L-glutaminyl-tRNA(Gln) + L-glutamate + ADP + phosphate + H(+). Functionally, allows the formation of correctly charged Gln-tRNA(Gln) through the transamidation of misacylated Glu-tRNA(Gln) in the mitochondria. The reaction takes place in the presence of glutamine and ATP through an activated gamma-phospho-Glu-tRNA(Gln). Required for proper protein synthesis within the mitochondrion. This is Glutamyl-tRNA(Gln) amidotransferase subunit F, mitochondrial from Zygosaccharomyces rouxii (strain ATCC 2623 / CBS 732 / NBRC 1130 / NCYC 568 / NRRL Y-229).